We begin with the raw amino-acid sequence, 185 residues long: Protein N-terminal glutamine amidohydrolase (185 aa).

Active-site residues include cysteine 14, histidine 62, and aspartate 78.

It belongs to the NTAQ1 family. As to quaternary structure, monomer.

It catalyses the reaction N-terminal L-glutaminyl-[protein] + H2O = N-terminal L-glutamyl-[protein] + NH4(+). Its function is as follows. Mediates the side-chain deamidation of N-terminal glutamine residues to glutamate, an important step in N-end rule pathway of protein degradation. Conversion of the resulting N-terminal glutamine to glutamate renders the protein susceptible to arginylation, polyubiquitination and degradation as specified by the N-end rule. Does not act on substrates with internal or C-terminal glutamine and does not act on non-glutamine residues in any position. The polypeptide is Protein N-terminal glutamine amidohydrolase (Caenorhabditis briggsae).